Here is a 407-residue protein sequence, read N- to C-terminus: D-inositol 3-phosphate glycosyltransferase (407 aa).

His2 provides a ligand contact to 1D-myo-inositol 3-phosphate. UDP-N-acetyl-alpha-D-glucosamine contacts are provided by residues 8–9 (QP) and Gly16. 1D-myo-inositol 3-phosphate-binding positions include 13 to 18 (DAGGLN), Arg71, Tyr104, Thr128, and Arg148. Arg222 and Lys227 together coordinate UDP-N-acetyl-alpha-D-glucosamine. Mg(2+) is bound by residues Tyr297, Arg298, and Ala300. UDP-N-acetyl-alpha-D-glucosamine is bound by residues Glu310 and Glu318. Position 324 (Thr324) interacts with Mg(2+).

This sequence belongs to the glycosyltransferase group 1 family. MshA subfamily. As to quaternary structure, homodimer.

It carries out the reaction 1D-myo-inositol 3-phosphate + UDP-N-acetyl-alpha-D-glucosamine = 1D-myo-inositol 2-acetamido-2-deoxy-alpha-D-glucopyranoside 3-phosphate + UDP + H(+). Functionally, catalyzes the transfer of a N-acetyl-glucosamine moiety to 1D-myo-inositol 3-phosphate to produce 1D-myo-inositol 2-acetamido-2-deoxy-glucopyranoside 3-phosphate in the mycothiol biosynthesis pathway. This chain is D-inositol 3-phosphate glycosyltransferase, found in Frankia alni (strain DSM 45986 / CECT 9034 / ACN14a).